Consider the following 236-residue polypeptide: Large ribosomal subunit protein uL1 (236 aa).

It belongs to the universal ribosomal protein uL1 family. In terms of assembly, part of the 50S ribosomal subunit.

Binds directly to 23S rRNA. The L1 stalk is quite mobile in the ribosome, and is involved in E site tRNA release. Its function is as follows. Protein L1 is also a translational repressor protein, it controls the translation of the L11 operon by binding to its mRNA. This chain is Large ribosomal subunit protein uL1, found in Heliobacterium modesticaldum (strain ATCC 51547 / Ice1).